A 1147-amino-acid polypeptide reads, in one-letter code: PDZ domain-containing protein 8 (1147 aa).

Residues 2–24 form a helical membrane-spanning segment; it reads GLLLLILASAVLGSFLTLLAQFL. One can recognise an SMP-LTD domain in the interval 87-293; that stretch reads APPTLETCYF…LPSYKIRFKP (207 aa). The region spanning 365-448 is the PDZ domain; that stretch reads TVELIKGNLQ…RVLVYYQRPA (84 aa). Ser-490, Ser-515, and Ser-532 each carry phosphoserine. The disordered stretch occupies residues 504–673; it reads ELKEETQPLS…DSSDDPQMWE (170 aa). The segment covering 510–524 has biased composition (polar residues); that stretch reads QPLSHSPKRTPTTLS. The span at 557-576 shows a compositional bias: polar residues; sequence KPSTLKTSETTEAAQVSKPQ. Residues 580–596 are compositionally biased toward pro residues; the sequence is FKPPVPPRPQGRVPLPP. A Phorbol-ester/DAG-type zinc finger spans residues 833–884; it reads KHSFQDTQFQNPTWCDYCKKKVWTKAASQCMFCAYVCHKKCQEKCLAETPLC. Positions 948-990 are disordered; it reads RLSEPGTDLVEPSPKHTPNTSDNEGSDTEVCGSNSPSKRGNSA. Phosphoserine is present on residues Ser-960 and Ser-973. Positions 978–987 are enriched in polar residues; it reads CGSNSPSKRG. Residues 1021-1056 are a coiled coil; sequence PTEERIQKLEFMLDKLQNEIDQELEHNNSLVREEKE. The span at 1126 to 1137 shows a compositional bias: polar residues; sequence QLIDSQPFSNIS. A disordered region spans residues 1126–1147; sequence QLIDSQPFSNISDDLFGPSESV.

Interacts with MSN.

It localises to the endoplasmic reticulum membrane. Functionally, molecular tethering protein that connects endoplasmic reticulum and mitochondria membranes. PDZD8-dependent endoplasmic reticulum-mitochondria membrane tethering is essential for endoplasmic reticulum-mitochondria Ca(2+) transfer. In neurons, involved in the regulation of dendritic Ca(2+) dynamics by regulating mitochondrial Ca(2+) uptake in neurons. The chain is PDZ domain-containing protein 8 from Mus musculus (Mouse).